Reading from the N-terminus, the 431-residue chain is STE20-related kinase adapter protein alpha (431 aa).

Phosphoserine occurs at positions 2 and 46. Disordered stretches follow at residues 32–52 and 314–344; these read EQPP…SIAS and PSRS…SHPY. Positions 69–379 constitute a Protein kinase domain; that stretch reads YELLTIIGKG…ASTLLNHSFF (311 aa). Threonine 419 carries the post-translational modification Phosphothreonine; by LKB1.

It belongs to the protein kinase superfamily. STE Ser/Thr protein kinase family. STE20 subfamily. In terms of assembly, component of a trimeric complex composed of STK11/LKB1, STRAD (STRADA or STRADB) and CAB39/MO25 (CAB39/MO25alpha or CAB39L/MO25beta): the complex tethers STK11/LKB1 in the cytoplasm and stimulates its catalytic activity.

It is found in the nucleus. The protein localises to the cytoplasm. In terms of biological role, pseudokinase which, in complex with CAB39/MO25 (CAB39/MO25alpha or CAB39L/MO25beta), binds to and activates STK11/LKB1. Adopts a closed conformation typical of active protein kinases and binds STK11/LKB1 as a pseudosubstrate, promoting conformational change of STK11/LKB1 in an active conformation. The sequence is that of STE20-related kinase adapter protein alpha (Strada) from Mus musculus (Mouse).